Reading from the N-terminus, the 426-residue chain is L-cysteine:1D-myo-inositol 2-amino-2-deoxy-alpha-D-glucopyranoside ligase (426 aa).

Cys-43 lines the Zn(2+) pocket. L-cysteinyl-5'-AMP-binding positions include 43-46 (CGIT), Ser-58, and 81-83 (NVT). Residues 45–55 (ITPYDATHMGH) carry the 'HIGH' region motif. The 'ERGGDP' region motif lies at 200 to 205 (ERGGDP). Trp-241 lines the L-cysteinyl-5'-AMP pocket. Cys-245 contacts Zn(2+). An L-cysteinyl-5'-AMP-binding site is contributed by 263-265 (GSD). Residue His-270 participates in Zn(2+) binding. Residue Val-296 coordinates L-cysteinyl-5'-AMP. A 'KMSKS' region motif is present at residues 302 to 306 (KMSKS).

This sequence belongs to the class-I aminoacyl-tRNA synthetase family. MshC subfamily. As to quaternary structure, monomer. Requires Zn(2+) as cofactor.

It catalyses the reaction 1D-myo-inositol 2-amino-2-deoxy-alpha-D-glucopyranoside + L-cysteine + ATP = 1D-myo-inositol 2-(L-cysteinylamino)-2-deoxy-alpha-D-glucopyranoside + AMP + diphosphate + H(+). Its function is as follows. Catalyzes the ATP-dependent condensation of GlcN-Ins and L-cysteine to form L-Cys-GlcN-Ins. This Arthrobacter sp. (strain FB24) protein is L-cysteine:1D-myo-inositol 2-amino-2-deoxy-alpha-D-glucopyranoside ligase.